The primary structure comprises 274 residues: Elongation factor Ts (274 aa).

Residues 82 to 85 form an involved in Mg(2+) ion dislocation from EF-Tu region; that stretch reads TDFV.

The protein belongs to the EF-Ts family.

Its subcellular location is the cytoplasm. In terms of biological role, associates with the EF-Tu.GDP complex and induces the exchange of GDP to GTP. It remains bound to the aminoacyl-tRNA.EF-Tu.GTP complex up to the GTP hydrolysis stage on the ribosome. This Christiangramia forsetii (strain DSM 17595 / CGMCC 1.15422 / KT0803) (Gramella forsetii) protein is Elongation factor Ts.